A 356-amino-acid chain; its full sequence is Pyruvate dehydrogenase E1 component subunit beta, mitochondrial (356 aa).

A mitochondrion-targeting transit peptide spans 1-25 (MLSSILKKIQPSLLVNFRIITRTYA). Glu-85 contributes to the thiamine diphosphate binding site. Ile-138, Ala-186, Ile-187, Asp-189, and Asn-191 together coordinate K(+).

In terms of assembly, tetramer of 2 alpha and 2 beta subunits. The cofactor is thiamine diphosphate.

Its subcellular location is the mitochondrion matrix. The enzyme catalyses N(6)-[(R)-lipoyl]-L-lysyl-[protein] + pyruvate + H(+) = N(6)-[(R)-S(8)-acetyldihydrolipoyl]-L-lysyl-[protein] + CO2. In terms of biological role, the pyruvate dehydrogenase complex catalyzes the overall conversion of pyruvate to acetyl-CoA and CO(2). It contains multiple copies of three enzymatic components: pyruvate dehydrogenase (E1), dihydrolipoamide acetyltransferase (E2) and lipoamide dehydrogenase (E3). The sequence is that of Pyruvate dehydrogenase E1 component subunit beta, mitochondrial (pdhB) from Dictyostelium discoideum (Social amoeba).